Reading from the N-terminus, the 179-residue chain is Casparian strip membrane protein 1 (179 aa).

The Cytoplasmic segment spans residues 1 to 17 (MKAGPLQLGVVPPANRA). The helical transmembrane segment at 18 to 38 (IAILDFFLRPIAIVGTLASAI) threads the bilayer. At 39–67 (AMATTNQTLPFFSQFIRFRAKFNDLPSFT) the chain is on the extracellular side. A glycan (N-linked (GlcNAc...) asparagine) is linked at Asn-44. The helical transmembrane segment at 68 to 88 (FFVVASSIVSAYLILSLGFSI) threads the bilayer. Over 89-100 (LHIAKSNLVNSR) the chain is Cytoplasmic. Residues 101–121 (VLLLLLDTAAMGLLMAGSAAA) traverse the membrane as a helical segment. Topologically, residues 122-154 (TAIVQLAHKGNNKVNWFAICQQYNSFCKRVSGS) are extracellular. Residues 155-175 (LIGSYAGVVVLILLILLSGVA) traverse the membrane as a helical segment. Residues 176–179 (LSRR) lie on the Cytoplasmic side of the membrane.

This sequence belongs to the Casparian strip membrane proteins (CASP) family. As to quaternary structure, homodimer and heterodimers.

Its subcellular location is the cell membrane. In terms of biological role, regulates membrane-cell wall junctions and localized cell wall deposition. Required for establishment of the Casparian strip membrane domain (CSD) and the subsequent formation of Casparian strips, a cell wall modification of the root endodermis that determines an apoplastic barrier between the intraorganismal apoplasm and the extraorganismal apoplasm and prevents lateral diffusion. This chain is Casparian strip membrane protein 1, found in Lactuca sativa (Garden lettuce).